The following is a 472-amino-acid chain: Probable serine/threonine-protein kinase At1g01540 (472 aa).

Residues 24–44 (LWVVIGILLGSLIVIALFLLS) traverse the membrane as a helical segment. Threonine 67 and threonine 143 each carry phosphothreonine. The Protein kinase domain maps to 154-431 (LCEENVIGEG…IHMLEAEDLL (278 aa)). ATP is bound by residues 160–168 (IGEGGYGIV) and lysine 182. Position 227 is a phosphotyrosine (tyrosine 227). Residue aspartate 280 is the Proton acceptor of the active site. A Phosphoserine modification is found at serine 284. Phosphothreonine occurs at positions 314 and 319. At tyrosine 327 the chain carries Phosphotyrosine. A compositionally biased stretch (basic and acidic residues) spans 437 to 449 (RTTRDHGSRERQE). The segment at 437–472 (RTTRDHGSRERQETAVVAAGSESGESGSRHHQQKQR) is disordered. Over residues 451-462 (AVVAAGSESGES) the composition is skewed to low complexity.

Belongs to the protein kinase superfamily. Ser/Thr protein kinase family.

Its subcellular location is the membrane. It catalyses the reaction L-seryl-[protein] + ATP = O-phospho-L-seryl-[protein] + ADP + H(+). The enzyme catalyses L-threonyl-[protein] + ATP = O-phospho-L-threonyl-[protein] + ADP + H(+). The protein is Probable serine/threonine-protein kinase At1g01540 of Arabidopsis thaliana (Mouse-ear cress).